Reading from the N-terminus, the 108-residue chain is Integration host factor subunit alpha (108 aa).

It belongs to the bacterial histone-like protein family. In terms of assembly, heterodimer of an alpha and a beta chain.

This protein is one of the two subunits of integration host factor, a specific DNA-binding protein that functions in genetic recombination as well as in transcriptional and translational control. The protein is Integration host factor subunit alpha of Bartonella henselae (strain ATCC 49882 / DSM 28221 / CCUG 30454 / Houston 1) (Rochalimaea henselae).